The sequence spans 287 residues: Putative ABC transporter ATP-binding protein MM_1038 (287 aa).

Positions 5-238 (LENISVFYSR…ENVPLPPVAS (234 aa)) constitute an ABC transporter domain. Position 40–47 (40–47 (GEKGAGKS)) interacts with ATP.

The protein belongs to the ABC transporter superfamily.

The protein localises to the cell membrane. In terms of biological role, probably part of an ABC transporter complex. Responsible for energy coupling to the transport system. The sequence is that of Putative ABC transporter ATP-binding protein MM_1038 from Methanosarcina mazei (strain ATCC BAA-159 / DSM 3647 / Goe1 / Go1 / JCM 11833 / OCM 88) (Methanosarcina frisia).